We begin with the raw amino-acid sequence, 23 residues long: U1-ctenitoxin-Co1a (23 aa).

A disulfide bond links Cys-10 and Cys-20.

In terms of tissue distribution, expressed by the venom gland.

The protein localises to the secreted. Functionally, insecticidal neurotoxin that reversibly inhibits the N-methyl-D-aspartate (NMDA)-subtype of ionotropic glutamate receptor (GRIN) and inhibits inactivation of insect sodium channels (Nav). In vivo, is highly toxic to insects. The protein is U1-ctenitoxin-Co1a of Ctenus ornatus (Brazilian spider).